Here is a 391-residue protein sequence, read N- to C-terminus: F-box/kelch-repeat protein At3g16740 (391 aa).

One can recognise an F-box domain in the interval 1–47 (MVQISDLPRDLTEEVLSRIPVTSMRAVRFTCKKWNTLSKDRSFTKKH). 2 Kelch repeats span residues 104 to 154 (KIFH…YEEK) and 163 to 215 (ILRF…LKGN).

As to quaternary structure, part of a SCF (ASK-cullin-F-box) protein ligase complex. Interacts with ASK11.

The protein resides in the nucleus. It functions in the pathway protein modification; protein ubiquitination. In terms of biological role, component of SCF(ASK-cullin-F-box) E3 ubiquitin ligase complexes, which may mediate the ubiquitination and subsequent proteasomal degradation of target proteins. In Arabidopsis thaliana (Mouse-ear cress), this protein is F-box/kelch-repeat protein At3g16740.